Consider the following 505-residue polypeptide: Glycerol kinase (505 aa).

ADP is bound at residue Thr14. Thr14, Thr15, and Ser16 together coordinate ATP. Position 14 (Thr14) interacts with sn-glycerol 3-phosphate. Arg18 is an ADP binding site. Residues Arg84, Glu85, Tyr136, and Asp246 each coordinate sn-glycerol 3-phosphate. Positions 84, 85, 136, 246, and 247 each coordinate glycerol. ADP is bound by residues Thr268 and Gly311. ATP is bound by residues Thr268, Gly311, Gln315, and Gly412. The ADP site is built by Gly412 and Asn416.

Belongs to the FGGY kinase family.

The catalysed reaction is glycerol + ATP = sn-glycerol 3-phosphate + ADP + H(+). Its pathway is polyol metabolism; glycerol degradation via glycerol kinase pathway; sn-glycerol 3-phosphate from glycerol: step 1/1. Its activity is regulated as follows. Inhibited by fructose 1,6-bisphosphate (FBP). Key enzyme in the regulation of glycerol uptake and metabolism. Catalyzes the phosphorylation of glycerol to yield sn-glycerol 3-phosphate. The sequence is that of Glycerol kinase from Vibrio cholerae serotype O1 (strain M66-2).